A 110-amino-acid polypeptide reads, in one-letter code: Insulin (110 aa).

The N-terminal stretch at 1–24 (MASLAALLPLLALLVLCRLDPAQA) is a signal peptide. Disulfide bonds link C31–C96, C43–C109, and C95–C100. Residues 57–87 (EVEELQVGQAELGGGPGAGGLQPSALELALQ) constitute a propeptide, c peptide.

Belongs to the insulin family. Heterodimer of a B chain and an A chain linked by two disulfide bonds.

Its subcellular location is the secreted. Its function is as follows. Insulin decreases blood glucose concentration. It increases cell permeability to monosaccharides, amino acids and fatty acids. It accelerates glycolysis, the pentose phosphate cycle, and glycogen synthesis in liver. This Oryctolagus cuniculus (Rabbit) protein is Insulin (INS).